Consider the following 327-residue polypeptide: Methionyl-tRNA formyltransferase (327 aa).

(6S)-5,6,7,8-tetrahydrofolate is bound at residue 111-114 (SLLP).

The protein belongs to the Fmt family.

The enzyme catalyses L-methionyl-tRNA(fMet) + (6R)-10-formyltetrahydrofolate = N-formyl-L-methionyl-tRNA(fMet) + (6S)-5,6,7,8-tetrahydrofolate + H(+). Attaches a formyl group to the free amino group of methionyl-tRNA(fMet). The formyl group appears to play a dual role in the initiator identity of N-formylmethionyl-tRNA by promoting its recognition by IF2 and preventing the misappropriation of this tRNA by the elongation apparatus. This is Methionyl-tRNA formyltransferase from Synechococcus elongatus (strain ATCC 33912 / PCC 7942 / FACHB-805) (Anacystis nidulans R2).